A 306-amino-acid chain; its full sequence is Nucleotide-binding protein amb4396 (306 aa).

Positions 1-14 (MSDLHSSPTDQTSA) are enriched in polar residues. The interval 1 to 20 (MSDLHSSPTDQTSAPAHAGG) is disordered. 29–36 (GMSGAGKT) contributes to the ATP binding site. 77–80 (DIRT) is a GTP binding site.

The protein belongs to the RapZ-like family.

In terms of biological role, displays ATPase and GTPase activities. The protein is Nucleotide-binding protein amb4396 of Paramagnetospirillum magneticum (strain ATCC 700264 / AMB-1) (Magnetospirillum magneticum).